The following is a 336-amino-acid chain: Mitochondrial amidoxime reducing component 2 (336 aa).

The transit peptide at 1–35 (MGAAGSSALARLGLPALPGPRWLGVAALGLAAVAL) directs the protein to the mitochondrion. Residues K138, K144, K173, K187, K287, and K294 each participate in a glycyl lysine isopeptide (Lys-Gly) (interchain with G-Cter in ubiquitin) cross-link. The MOSC domain maps to 188 to 334 (ARASNEIFPS…LKVGDPVYQM (147 aa)).

As to quaternary structure, component of a complex composed of cytochrome b5, NADH-cytochrome b5 reductase (CYB5R3) and MTARC2. Requires Mo-molybdopterin as cofactor. Post-translationally, ubiquitinated by PRKN during mitophagy, leading to its degradation and enhancement of mitophagy. Deubiquitinated by USP30.

Its subcellular location is the mitochondrion outer membrane. It localises to the peroxisome. The enzyme catalyses N(omega)-hydroxy-L-arginine + 2 Fe(II)-[cytochrome b5] + 2 H(+) = L-arginine + 2 Fe(III)-[cytochrome b5] + H2O. Its function is as follows. Catalyzes the reduction of N-oxygenated molecules, acting as a counterpart of cytochrome P450 and flavin-containing monooxygenases in metabolic cycles. As a component of prodrug-converting system, reduces a multitude of N-hydroxylated prodrugs particularly amidoximes, leading to increased drug bioavailability. May be involved in mitochondrial N(omega)-hydroxy-L-arginine (NOHA) reduction, regulating endogenous nitric oxide levels and biosynthesis. Postulated to cleave the N-OH bond of N-hydroxylated substrates in concert with electron transfer from NADH to cytochrome b5 reductase then to cytochrome b5, the ultimate electron donor that primes the active site for substrate reduction. In Bos taurus (Bovine), this protein is Mitochondrial amidoxime reducing component 2 (MTARC2).